The chain runs to 560 residues: DNA ligase B (560 aa).

The N6-AMP-lysine intermediate role is filled by Lys-124.

The protein belongs to the NAD-dependent DNA ligase family. LigB subfamily.

The catalysed reaction is NAD(+) + (deoxyribonucleotide)n-3'-hydroxyl + 5'-phospho-(deoxyribonucleotide)m = (deoxyribonucleotide)n+m + AMP + beta-nicotinamide D-nucleotide.. Catalyzes the formation of phosphodiester linkages between 5'-phosphoryl and 3'-hydroxyl groups in double-stranded DNA using NAD as a coenzyme and as the energy source for the reaction. This is DNA ligase B from Escherichia coli O6:K15:H31 (strain 536 / UPEC).